We begin with the raw amino-acid sequence, 328 residues long: Stress response kinase A (328 aa).

The active-site Proton acceptor is the D201. Residues N206 and D217 each coordinate Mg(2+). D217 is an active-site residue.

Belongs to the SrkA/RdoA protein kinase family. As to quaternary structure, monomer. The cofactor is Mg(2+).

It localises to the cytoplasm. The enzyme catalyses L-seryl-[protein] + ATP = O-phospho-L-seryl-[protein] + ADP + H(+). It catalyses the reaction L-threonyl-[protein] + ATP = O-phospho-L-threonyl-[protein] + ADP + H(+). In terms of biological role, a protein kinase that phosphorylates Ser and Thr residues. Probably acts to suppress the effects of stress linked to accumulation of reactive oxygen species. Probably involved in the extracytoplasmic stress response. The protein is Stress response kinase A of Escherichia coli O157:H7.